We begin with the raw amino-acid sequence, 658 residues long: Methionine--tRNA ligase (658 aa).

The 'HIGH' region motif lies at 9–19 (PYANGKAHVGH). The Zn(2+) site is built by Cys-140, Cys-143, Cys-152, and Cys-156. The short motif at 322-326 (TFSKS) is the 'KMSKS' region element. Lys-325 is an ATP binding site. One can recognise a tRNA-binding domain in the interval 558 to 658 (DFQKLDIRIG…KEVEPGTRVC (101 aa)).

Belongs to the class-I aminoacyl-tRNA synthetase family. MetG type 1 subfamily. In terms of assembly, homodimer. Zn(2+) serves as cofactor.

The protein localises to the cytoplasm. It carries out the reaction tRNA(Met) + L-methionine + ATP = L-methionyl-tRNA(Met) + AMP + diphosphate. Its function is as follows. Is required not only for elongation of protein synthesis but also for the initiation of all mRNA translation through initiator tRNA(fMet) aminoacylation. This chain is Methionine--tRNA ligase, found in Archaeoglobus fulgidus (strain ATCC 49558 / DSM 4304 / JCM 9628 / NBRC 100126 / VC-16).